The primary structure comprises 115 residues: UPF0145 protein lp_2083 (115 aa).

Belongs to the UPF0145 family.

The protein is UPF0145 protein lp_2083 of Lactiplantibacillus plantarum (strain ATCC BAA-793 / NCIMB 8826 / WCFS1) (Lactobacillus plantarum).